A 26-amino-acid polypeptide reads, in one-letter code: VGTALGSLAEELNGYNRKKGGFSFRF.

At Phe-26 the chain carries Phenylalanine amide.

In terms of tissue distribution, brain.

Its subcellular location is the secreted. May have orexigenic activity. May promote aldosterone secretion by the adrenal gland. The chain is Orexigenic neuropeptide 26RFa from Pelophylax lessonae (Pool frog).